Reading from the N-terminus, the 289-residue chain is Elongation factor Ts (289 aa).

The interval 80–83 (TDFV) is involved in Mg(2+) ion dislocation from EF-Tu.

This sequence belongs to the EF-Ts family.

It is found in the cytoplasm. Associates with the EF-Tu.GDP complex and induces the exchange of GDP to GTP. It remains bound to the aminoacyl-tRNA.EF-Tu.GTP complex up to the GTP hydrolysis stage on the ribosome. The sequence is that of Elongation factor Ts from Francisella tularensis subsp. tularensis (strain FSC 198).